The primary structure comprises 196 residues: Holliday junction branch migration complex subunit RuvA (196 aa).

A domain I region spans residues 1–63 (MISFVSGRVA…EDSLTLYGFA (63 aa)). A domain II region spans residues 64-136 (DDDERTVFEL…LKDRLGTPST (73 aa)). The segment at 136 to 140 (TAAAE) is flexible linker. The segment at 141-196 (STSGWRDAVHAGLLNLGYTARQADEAIAAIAGELDDSAAVDTATALRLALATLKRP) is domain III.

This sequence belongs to the RuvA family. As to quaternary structure, homotetramer. Forms an RuvA(8)-RuvB(12)-Holliday junction (HJ) complex. HJ DNA is sandwiched between 2 RuvA tetramers; dsDNA enters through RuvA and exits via RuvB. An RuvB hexamer assembles on each DNA strand where it exits the tetramer. Each RuvB hexamer is contacted by two RuvA subunits (via domain III) on 2 adjacent RuvB subunits; this complex drives branch migration. In the full resolvosome a probable DNA-RuvA(4)-RuvB(12)-RuvC(2) complex forms which resolves the HJ.

It is found in the cytoplasm. Its function is as follows. The RuvA-RuvB-RuvC complex processes Holliday junction (HJ) DNA during genetic recombination and DNA repair, while the RuvA-RuvB complex plays an important role in the rescue of blocked DNA replication forks via replication fork reversal (RFR). RuvA specifically binds to HJ cruciform DNA, conferring on it an open structure. The RuvB hexamer acts as an ATP-dependent pump, pulling dsDNA into and through the RuvAB complex. HJ branch migration allows RuvC to scan DNA until it finds its consensus sequence, where it cleaves and resolves the cruciform DNA. This Acidothermus cellulolyticus (strain ATCC 43068 / DSM 8971 / 11B) protein is Holliday junction branch migration complex subunit RuvA.